Here is a 21-residue protein sequence, read N- to C-terminus: M-lycotoxin-Ls4a (21 aa).

L21 carries the post-translational modification Leucine amide.

As to expression, expressed by the venom gland.

It is found in the secreted. In terms of biological role, may inhibit growth of bacteria. The chain is M-lycotoxin-Ls4a from Lycosa singoriensis (Wolf spider).